Consider the following 149-residue polypeptide: Glutamyl-tRNA(Gln) amidotransferase subunit C, mitochondrial (149 aa).

Residues Met1 to Leu25 constitute a mitochondrion transit peptide.

This sequence belongs to the GatC family. As to quaternary structure, subunit of the heterotrimeric GatCAB amidotransferase (AdT) complex, composed of A, B and C subunits.

Its subcellular location is the mitochondrion. It carries out the reaction L-glutamyl-tRNA(Gln) + L-glutamine + ATP + H2O = L-glutaminyl-tRNA(Gln) + L-glutamate + ADP + phosphate + H(+). In terms of biological role, allows the formation of correctly charged Gln-tRNA(Gln) through the transamidation of misacylated Glu-tRNA(Gln) in the mitochondria. The reaction takes place in the presence of glutamine and ATP through an activated gamma-phospho-Glu-tRNA(Gln). In Branchiostoma floridae (Florida lancelet), this protein is Glutamyl-tRNA(Gln) amidotransferase subunit C, mitochondrial.